The following is a 118-amino-acid chain: Probable non-functional immunoglobulin lambda variable 1-50 (118 aa).

An N-terminal signal peptide occupies residues 1–19 (MAWSSLLLTLLAHCTGSWA). A framework-1 region spans residues 20–44 (QSVLTQPPSVSGAPGQRVTISCTGS). The Ig-like domain occupies 20 to 118 (QSVLTQPPSV…CKAWDNSLNA (99 aa)). C41 and C109 are disulfide-bonded. The interval 45-53 (SSNIGAGYV) is complementarity-determining-1. A framework-2 region spans residues 54 to 70 (VHWYQQLPGTAPKLLIY). The interval 71 to 73 (GNS) is complementarity-determining-2. Residues 74 to 109 (NRPSGVPDQFSGSKSGTSASLAITGLQSEDEADYYC) are framework-3. Residues 110–118 (KAWDNSLNA) form a complementarity-determining-3 region.

In terms of assembly, immunoglobulins are composed of two identical heavy chains and two identical light chains; disulfide-linked.

It is found in the secreted. The protein localises to the cell membrane. Its function is as follows. Probable non-functional open reading frame (ORF) of V region of the variable domain of immunoglobulin light chains. Non-functional ORF generally cannot participate in the synthesis of a productive immunoglobulin chain due to altered V-(D)-J or switch recombination and/or splicing site (at mRNA level) and/or conserved amino acid change (protein level). Immunoglobulins, also known as antibodies, are membrane-bound or secreted glycoproteins produced by B lymphocytes. In the recognition phase of humoral immunity, the membrane-bound immunoglobulins serve as receptors which, upon binding of a specific antigen, trigger the clonal expansion and differentiation of B lymphocytes into immunoglobulins-secreting plasma cells. Secreted immunoglobulins mediate the effector phase of humoral immunity, which results in the elimination of bound antigens. The antigen binding site is formed by the variable domain of one heavy chain, together with that of its associated light chain. Thus, each immunoglobulin has two antigen binding sites with remarkable affinity for a particular antigen. The variable domains are assembled by a process called V-(D)-J rearrangement and can then be subjected to somatic hypermutations which, after exposure to antigen and selection, allow affinity maturation for a particular antigen. The polypeptide is Probable non-functional immunoglobulin lambda variable 1-50 (Homo sapiens (Human)).